A 470-amino-acid chain; its full sequence is Ribulose bisphosphate carboxylase large chain (470 aa).

2 residues coordinate substrate: asparagine 115 and threonine 165. Lysine 167 (proton acceptor) is an active-site residue. Residue lysine 169 participates in substrate binding. The Mg(2+) site is built by lysine 193, aspartate 195, and glutamate 196. Lysine 193 bears the N6-carboxylysine mark. Histidine 286 acts as the Proton acceptor in catalysis. Substrate is bound by residues arginine 287, histidine 319, and serine 371.

Belongs to the RuBisCO large chain family. Type I subfamily. As to quaternary structure, heterohexadecamer of 8 large chains and 8 small chains. Mg(2+) serves as cofactor.

The protein localises to the carboxysome. It catalyses the reaction 2 (2R)-3-phosphoglycerate + 2 H(+) = D-ribulose 1,5-bisphosphate + CO2 + H2O. The catalysed reaction is D-ribulose 1,5-bisphosphate + O2 = 2-phosphoglycolate + (2R)-3-phosphoglycerate + 2 H(+). Its function is as follows. RuBisCO catalyzes two reactions: the carboxylation of D-ribulose 1,5-bisphosphate, the primary event in carbon dioxide fixation, as well as the oxidative fragmentation of the pentose substrate in the photorespiration process. Both reactions occur simultaneously and in competition at the same active site. The chain is Ribulose bisphosphate carboxylase large chain from Prochlorococcus marinus (strain NATL1A).